A 180-amino-acid polypeptide reads, in one-letter code: ATP synthase subunit delta, chloroplastic (180 aa).

The protein belongs to the ATPase delta chain family. As to quaternary structure, F-type ATPases have 2 components, F(1) - the catalytic core - and F(0) - the membrane proton channel. F(1) has five subunits: alpha(3), beta(3), gamma(1), delta(1), epsilon(1). CF(0) has four main subunits: a(1), b(1), b'(1) and c(10-14). The alpha and beta chains form an alternating ring which encloses part of the gamma chain. F(1) is attached to F(0) by a central stalk formed by the gamma and epsilon chains, while a peripheral stalk is formed by the delta, b and b' chains.

It localises to the plastid. The protein localises to the chloroplast thylakoid membrane. Functionally, f(1)F(0) ATP synthase produces ATP from ADP in the presence of a proton or sodium gradient. F-type ATPases consist of two structural domains, F(1) containing the extramembraneous catalytic core and F(0) containing the membrane proton channel, linked together by a central stalk and a peripheral stalk. During catalysis, ATP synthesis in the catalytic domain of F(1) is coupled via a rotary mechanism of the central stalk subunits to proton translocation. In terms of biological role, this protein is part of the stalk that links CF(0) to CF(1). It either transmits conformational changes from CF(0) to CF(1) or is implicated in proton conduction. This Rhodomonas salina (Cryptomonas salina) protein is ATP synthase subunit delta, chloroplastic.